Consider the following 342-residue polypeptide: Transmembrane protein 268 (342 aa).

2 consecutive transmembrane segments (helical) span residues 106 to 126 (AFAVVFYVLVWANIYSTSQMF) and 133 to 153 (AGVLLATLAAFSLTLTLVLVF). The segment at 245–267 (VEGPEDLEDAPLLPSTPGPQERP) is disordered.

As to quaternary structure, interacts with ITGAM; this interaction inhibits ITGAM degradation via the endosome-lysosome pathway. Interacts with ITGB4; this interaction prevents ITGB4 degradation.

It is found in the cell membrane. Its function is as follows. Stabilizes cell surface expression of ITGAM and participates in the adhesion and migration of phagocytes during bacterial clearance. This chain is Transmembrane protein 268, found in Mus musculus (Mouse).